The chain runs to 537 residues: Tegument protein BRRF2 (537 aa).

Disordered regions lie at residues 322-466 (PRFL…AEEF) and 486-537 (GLRV…LSVV). A compositionally biased stretch (polar residues) spans 334 to 347 (EPQQTCSQLTSRGN). A compositionally biased stretch (low complexity) spans 420–441 (VTGSSQAAPSSSSVTPVASLSG). Residues 492–517 (DEDEDGSEDGEFSDLDLSDSDHEGDE) show a composition bias toward acidic residues.

This sequence belongs to the lymphocryptovirus BRRF2 family.

It localises to the virion tegument. The sequence is that of Tegument protein BRRF2 from Homo sapiens (Human).